The sequence spans 316 residues: Transaldolase (316 aa).

The active-site Schiff-base intermediate with substrate is lysine 127.

The protein belongs to the transaldolase family. Type 2 subfamily.

The protein localises to the cytoplasm. It catalyses the reaction D-sedoheptulose 7-phosphate + D-glyceraldehyde 3-phosphate = D-erythrose 4-phosphate + beta-D-fructose 6-phosphate. It participates in carbohydrate degradation; pentose phosphate pathway; D-glyceraldehyde 3-phosphate and beta-D-fructose 6-phosphate from D-ribose 5-phosphate and D-xylulose 5-phosphate (non-oxidative stage): step 2/3. Its function is as follows. Transaldolase is important for the balance of metabolites in the pentose-phosphate pathway. The polypeptide is Transaldolase (Helicobacter pylori (strain P12)).